The following is a 702-amino-acid chain: Vacuolar protein sorting-associated protein 52 homolog (702 aa).

The stretch at 505–535 (KEMGAKMEAVLENSEDSIEQLLTRMSAMQQT) forms a coiled coil.

It belongs to the VPS52 family. In terms of assembly, component of the Golgi-associated retrograde protein (GARP) complex, also called VFT (VPS fifty-three) complex, composed of vps-51, vps-52, vps-53 and vps-54. Within the complex interacts with vps-53 and vps-54. Interacts with the small GTPases rab-6.1 and rab-6.2. As to expression, ubiquitously expressed, with particularly strong expression in neuronal cells. Specifically expressed in head and tail neurons and in the pharynx and ventral cord motor neurons.

It is found in the golgi apparatus. Its subcellular location is the trans-Golgi network. It localises to the perikaryon. The protein resides in the cytoplasm. The protein localises to the perinuclear region. Functionally, acts as a component of the GARP complex that is involved in retrograde transport from early and late endosomes to the trans-Golgi network (TGN). The GARP complex facilitates tethering as well as SNARE complex assembly at the Golgi. Plays a role in the trafficking of cargo to dense-core vesicles, probably through association with the EARP-interacting protein eipr-1. Important for neuronal function. This chain is Vacuolar protein sorting-associated protein 52 homolog, found in Caenorhabditis elegans.